The following is a 787-amino-acid chain: Endonuclease MutS2 (787 aa).

An ATP-binding site is contributed by 331–338 (GPNTGGKT). The Smr domain maps to 711–786 (IDVRGKTSDD…EQGVTVVELK (76 aa)).

This sequence belongs to the DNA mismatch repair MutS family. MutS2 subfamily. Homodimer. Binds to stalled ribosomes, contacting rRNA.

Its function is as follows. Endonuclease that is involved in the suppression of homologous recombination and thus may have a key role in the control of bacterial genetic diversity. Acts as a ribosome collision sensor, splitting the ribosome into its 2 subunits. Detects stalled/collided 70S ribosomes which it binds and splits by an ATP-hydrolysis driven conformational change. Acts upstream of the ribosome quality control system (RQC), a ribosome-associated complex that mediates the extraction of incompletely synthesized nascent chains from stalled ribosomes and their subsequent degradation. Probably generates substrates for RQC. The polypeptide is Endonuclease MutS2 (Caldicellulosiruptor bescii (strain ATCC BAA-1888 / DSM 6725 / KCTC 15123 / Z-1320) (Anaerocellum thermophilum)).